Consider the following 264-residue polypeptide: Thymidylate synthase (264 aa).

Arg-21 contacts dUMP. Position 51 (His-51) interacts with (6R)-5,10-methylene-5,6,7,8-tetrahydrofolate. 126–127 (RR) lines the dUMP pocket. The Nucleophile role is filled by Cys-146. DUMP is bound by residues 166-169 (RSAD), Asn-177, and 207-209 (HLY). Residue Asp-169 participates in (6R)-5,10-methylene-5,6,7,8-tetrahydrofolate binding. Ala-263 lines the (6R)-5,10-methylene-5,6,7,8-tetrahydrofolate pocket.

This sequence belongs to the thymidylate synthase family. Bacterial-type ThyA subfamily. As to quaternary structure, homodimer.

The protein resides in the cytoplasm. It catalyses the reaction dUMP + (6R)-5,10-methylene-5,6,7,8-tetrahydrofolate = 7,8-dihydrofolate + dTMP. Its pathway is pyrimidine metabolism; dTTP biosynthesis. Its function is as follows. Catalyzes the reductive methylation of 2'-deoxyuridine-5'-monophosphate (dUMP) to 2'-deoxythymidine-5'-monophosphate (dTMP) while utilizing 5,10-methylenetetrahydrofolate (mTHF) as the methyl donor and reductant in the reaction, yielding dihydrofolate (DHF) as a by-product. This enzymatic reaction provides an intracellular de novo source of dTMP, an essential precursor for DNA biosynthesis. This Hahella chejuensis (strain KCTC 2396) protein is Thymidylate synthase.